The sequence spans 463 residues: ATP-dependent protease ATPase subunit HslU (463 aa).

Residues I19, 61 to 66 (GVGKTE), D277, E341, and R413 each bind ATP.

It belongs to the ClpX chaperone family. HslU subfamily. As to quaternary structure, a double ring-shaped homohexamer of HslV is capped on each side by a ring-shaped HslU homohexamer. The assembly of the HslU/HslV complex is dependent on binding of ATP.

It localises to the cytoplasm. Its function is as follows. ATPase subunit of a proteasome-like degradation complex; this subunit has chaperone activity. The binding of ATP and its subsequent hydrolysis by HslU are essential for unfolding of protein substrates subsequently hydrolyzed by HslV. HslU recognizes the N-terminal part of its protein substrates and unfolds these before they are guided to HslV for hydrolysis. In Bacillus anthracis (strain A0248), this protein is ATP-dependent protease ATPase subunit HslU.